Here is a 67-residue protein sequence, read N- to C-terminus: DNA gyrase inhibitor YacG (67 aa).

Positions 8, 11, 27, and 31 each coordinate Zn(2+).

The protein belongs to the DNA gyrase inhibitor YacG family. In terms of assembly, interacts with GyrB. Zn(2+) is required as a cofactor.

Functionally, inhibits all the catalytic activities of DNA gyrase by preventing its interaction with DNA. Acts by binding directly to the C-terminal domain of GyrB, which probably disrupts DNA binding by the gyrase. The chain is DNA gyrase inhibitor YacG from Ralstonia pickettii (strain 12J).